A 720-amino-acid polypeptide reads, in one-letter code: Fatty acid CoA ligase Acsl3 (720 aa).

A helical; Signal-anchor for type III membrane protein membrane pass occupies residues 21–41; the sequence is ILLYFIHFIISLYTILTYIPF. The Cytoplasmic portion of the chain corresponds to 42-720; sequence YFLCESKQEK…ADIERMYGRK (679 aa). The residue at position 683 (S683) is a Phosphoserine.

This sequence belongs to the ATP-dependent AMP-binding enzyme family. Mg(2+) is required as a cofactor. Predominantly expressed in the brain, and to a much lesser extent, in lung, adrenal gland, kidney, small intestine, and adipose tissue but not detected in heart or liver.

It localises to the mitochondrion outer membrane. Its subcellular location is the peroxisome membrane. The protein resides in the microsome membrane. It is found in the endoplasmic reticulum membrane. The catalysed reaction is a long-chain fatty acid + ATP + CoA = a long-chain fatty acyl-CoA + AMP + diphosphate. It carries out the reaction (5Z,8Z,11Z,14Z)-eicosatetraenoate + ATP + CoA = (5Z,8Z,11Z,14Z)-eicosatetraenoyl-CoA + AMP + diphosphate. It catalyses the reaction a medium-chain fatty acid + ATP + CoA = a medium-chain fatty acyl-CoA + AMP + diphosphate. The enzyme catalyses 15-hydroxy-(5Z,8Z,11Z,13E)-eicosatetraenoate + ATP + CoA = 15-hydroxy-(5Z,8Z,11Z,13E)-eicosatetraenoyl-CoA + AMP + diphosphate. The catalysed reaction is 12-hydroxy-(5Z,8Z,10E,14Z)-eicosatetraenoate + ATP + CoA = 12-hydroxy-(5Z,8Z,10E,14Z)-eicosatetraenoyl-CoA + AMP + diphosphate. It carries out the reaction 5-hydroxy-(6E,8Z,11Z,14Z)-eicosatetraenoate + ATP + CoA = 5-hydroxy-(6E,8Z,11Z,14Z)-eicosatetraenoyl-CoA + AMP + diphosphate. It catalyses the reaction 14,15-epoxy-(5Z,8Z,11Z)-eicosatrienoate + ATP + CoA = 14,15-epoxy-(5Z,8Z,11Z)-eicosatrienoyl-CoA + AMP + diphosphate. The enzyme catalyses 11,12-epoxy-(5Z,8Z,14Z)-eicosatrienoate + ATP + CoA = 11,12-epoxy-(5Z,8Z,14Z)-eicosatrienoyl-CoA + AMP + diphosphate. The catalysed reaction is (E)-hexadec-2-enoate + ATP + CoA = (2E)-hexadecenoyl-CoA + AMP + diphosphate. It carries out the reaction hexadecanoate + ATP + CoA = hexadecanoyl-CoA + AMP + diphosphate. It catalyses the reaction tetradecanoate + ATP + CoA = tetradecanoyl-CoA + AMP + diphosphate. The enzyme catalyses dodecanoate + ATP + CoA = dodecanoyl-CoA + AMP + diphosphate. The catalysed reaction is octadecanoate + ATP + CoA = octadecanoyl-CoA + AMP + diphosphate. It carries out the reaction eicosanoate + ATP + CoA = eicosanoyl-CoA + AMP + diphosphate. It catalyses the reaction (9Z)-octadecenoate + ATP + CoA = (9Z)-octadecenoyl-CoA + AMP + diphosphate. The enzyme catalyses (9Z)-hexadecenoate + ATP + CoA = (9Z)-hexadecenoyl-CoA + AMP + diphosphate. The catalysed reaction is (9Z,12Z)-octadecadienoate + ATP + CoA = (9Z,12Z)-octadecadienoyl-CoA + AMP + diphosphate. It carries out the reaction (9Z,12Z,15Z)-octadecatrienoate + ATP + CoA = (9Z,12Z,15Z)-octadecatrienoyl-CoA + AMP + diphosphate. It catalyses the reaction (4Z,7Z,10Z,13Z,16Z,19Z)-docosahexaenoate + ATP + CoA = (4Z,7Z,10Z,13Z,16Z,19Z)-docosahexaenoyl-CoA + AMP + diphosphate. The enzyme catalyses (5Z,8Z,11Z,14Z,17Z)-eicosapentaenoate + ATP + CoA = (5Z,8Z,11Z,14Z,17Z)-eicosapentaenoyl-CoA + AMP + diphosphate. The catalysed reaction is a fatty acid + ATP + CoA = a fatty acyl-CoA + AMP + diphosphate. In terms of biological role, catalyzes the conversion of long-chain fatty acids to their active form acyl-CoA for both synthesis of cellular lipids, and degradation via beta-oxidation. ACSL3 is required for the incorporation of fatty acids into phosphatidylcholine, the major phospholipid located on the surface of VLDL (very low density lipoproteins). Has mainly an anabolic role in energy metabolism. Mediates hepatic lipogenesis. Preferentially uses myristate, laurate, arachidonate and eicosapentaenoate as substrates. Both isoforms exhibit the same level of activity. This is Fatty acid CoA ligase Acsl3 from Rattus norvegicus (Rat).